The sequence spans 185 residues: Elongation factor P (185 aa).

It belongs to the elongation factor P family.

The protein localises to the cytoplasm. It participates in protein biosynthesis; polypeptide chain elongation. In terms of biological role, involved in peptide bond synthesis. Stimulates efficient translation and peptide-bond synthesis on native or reconstituted 70S ribosomes in vitro. Probably functions indirectly by altering the affinity of the ribosome for aminoacyl-tRNA, thus increasing their reactivity as acceptors for peptidyl transferase. The polypeptide is Elongation factor P (Salinispora arenicola (strain CNS-205)).